Consider the following 425-residue polypeptide: Tyrosine--tRNA ligase (425 aa).

Y37 is a binding site for L-tyrosine. Residues 42–51 carry the 'HIGH' region motif; it reads PTADSLHLGH. 2 residues coordinate L-tyrosine: Y175 and Q179. The 'KMSKS' region motif lies at 235-239; it reads KFGKT. K238 is an ATP binding site. Positions 357-414 constitute an S4 RNA-binding domain; sequence ADLQQALVSAELVPSRGQARTMISSNAVTINGEKQANPEYIFSASDRLFDRYTLLRRG.

The protein belongs to the class-I aminoacyl-tRNA synthetase family. TyrS type 1 subfamily. Homodimer.

The protein resides in the cytoplasm. It carries out the reaction tRNA(Tyr) + L-tyrosine + ATP = L-tyrosyl-tRNA(Tyr) + AMP + diphosphate + H(+). Functionally, catalyzes the attachment of tyrosine to tRNA(Tyr) in a two-step reaction: tyrosine is first activated by ATP to form Tyr-AMP and then transferred to the acceptor end of tRNA(Tyr). This is Tyrosine--tRNA ligase from Pectobacterium atrosepticum (strain SCRI 1043 / ATCC BAA-672) (Erwinia carotovora subsp. atroseptica).